The primary structure comprises 395 residues: Phosphoprotein (395 aa).

The segment at 178-217 is disordered; sequence NGVLHGSEIRSKSSSGVIPGVPQSRPQLASSPAHADPAPA. The span at 206–217 shows a compositional bias: low complexity; it reads ASSPAHADPAPA. A multimerization region spans residues 220–283; sequence ENVKEIIELL…ITTIKIMDPS (64 aa).

It belongs to the rubulavirus/avulavirus P protein family. As to quaternary structure, homotetramer. Interacts (via multimerization domain) with polymerase L; this interaction forms the polymerase L-P complex. Interacts (via N-terminus) with N0 (via Ncore); this interaction allows P to chaperon N0 to avoid N polymerization before encapsidation. Interacts (via C-terminus) with N-RNA template; this interaction positions the polymerase on the template for both transcription and replication. Interacts with host ARHGAP26; this interaction promotes host RHOA activation. Interacts with host KPNA1 and KPNA6.

The protein resides in the host cytoplasm. Its function is as follows. Essential cofactor of the RNA polymerase L that plays a central role in the transcription and replication by forming the polymerase complex with RNA polymerase L and recruiting L to the genomic N-RNA template for RNA synthesis. Also plays a central role in the encapsidation of nascent RNA chains by forming the encapsidation complex with the nucleocapsid protein N (N-P complex). Acts as a chaperone for newly synthesized free N protein, so-called N0, allowing encapsidation of nascent RNA chains during replication. The nucleoprotein protein N prevents excessive phosphorylation of P, which leads to down-regulation of viral transcription/ replication. Participates, together with N, in the formation of viral factories (viroplasms), which are large inclusions in the host cytoplasm where replication takes place. Also plays a role in viral growth by promoting host RHOA activation and thus actin formation via ARHGAP26 inhibition. This is Phosphoprotein (P/V) from Homo sapiens (Human).